We begin with the raw amino-acid sequence, 142 residues long: Small ribosomal subunit protein uS9c (142 aa).

Belongs to the universal ribosomal protein uS9 family.

The protein localises to the plastid. Its subcellular location is the chloroplast. The chain is Small ribosomal subunit protein uS9c (rps9) from Stigeoclonium helveticum (Green alga).